A 25-amino-acid chain; its full sequence is IWLTALKFLGKNLGKHLAKQQLAKL.

Leu25 carries the post-translational modification Leucine amide.

As to expression, expressed by the venom gland.

It is found in the secreted. Has antimicrobial activity against Gram-positive bacterium S.aureus (MIC=3.79 uM), Gram-negative bacterium E.coli (MIC=7.81 uM) and yeasts C.krusei (MIC=26.3 uM) and C.neoformans (MIC=13.2 uM). Has hemolytic activity against rabbit erythrocytes. Forms pores in lipid bilayers in vitro; pore formation is reduced when cholesterol is present in the bilayers. This Lycosa erythrognatha (Wolf spider) protein is Toxin LyeTx 1.